The sequence spans 599 residues: Aspartate--tRNA(Asp/Asn) ligase (599 aa).

Glu174 contacts L-aspartate. The segment at 198–201 is aspartate; it reads QLFK. Position 220 (Arg220) interacts with L-aspartate. Residues 220–222 and Gln229 each bind ATP; that span reads RDE. Residue His457 participates in L-aspartate binding. Residue Glu491 participates in ATP binding. Arg498 serves as a coordination point for L-aspartate. Residue 543 to 546 coordinates ATP; it reads GLDR.

Belongs to the class-II aminoacyl-tRNA synthetase family. Type 1 subfamily. Homodimer.

It is found in the cytoplasm. The enzyme catalyses tRNA(Asx) + L-aspartate + ATP = L-aspartyl-tRNA(Asx) + AMP + diphosphate. Aspartyl-tRNA synthetase with relaxed tRNA specificity since it is able to aspartylate not only its cognate tRNA(Asp) but also tRNA(Asn). Reaction proceeds in two steps: L-aspartate is first activated by ATP to form Asp-AMP and then transferred to the acceptor end of tRNA(Asp/Asn). This chain is Aspartate--tRNA(Asp/Asn) ligase, found in Paraburkholderia phymatum (strain DSM 17167 / CIP 108236 / LMG 21445 / STM815) (Burkholderia phymatum).